The primary structure comprises 421 residues: Solute carrier family 35 member F3 (421 aa).

The segment at 25-53 is disordered; that stretch reads EGEERPREPPGPAEAQAPAGTEAGGRTSR. Positions 37–49 are enriched in low complexity; sequence AEAQAPAGTEAGG. The next 10 helical transmembrane spans lie at 66–86, 98–118, 149–169, 179–199, 208–228, 232–252, 266–286, 305–325, 326–346, and 352–372; these read VFWGVAVVFCVCASWAGSTQL, FTLTWFATNWNFLFFPLYYAG, VFFTKAAPFGVLWTLTNYLYL, DVSVLFCCNKSFVFLLSWIVL, IVAAILAIAGIVMMTYADGFH, VIGIALVVGSASMSALYKVLF, LFLSILGVFNILFITCIPVIL, LCGFSILLLTFNIVLNFGIAV, TYPTLMSLGIVLSVPVNAVVD, and IVFNGVRVIAIIIIGLGFLLL. Residues 394-421 form a disordered region; it reads KEETAESSGDLGTGPQSRSRRARPSFAR. The segment covering 411 to 421 has biased composition (basic residues); that stretch reads RSRRARPSFAR.

This sequence belongs to the SLC35F solute transporter family.

Its subcellular location is the membrane. The enzyme catalyses thiamine(in) = thiamine(out). In terms of biological role, mediates thiamine transport. In Mus musculus (Mouse), this protein is Solute carrier family 35 member F3 (Slc35f3).